The sequence spans 102 residues: Co-chaperonin GroES (102 aa).

Belongs to the GroES chaperonin family. Heptamer of 7 subunits arranged in a ring. Interacts with the chaperonin GroEL.

The protein resides in the cytoplasm. Its function is as follows. Together with the chaperonin GroEL, plays an essential role in assisting protein folding. The GroEL-GroES system forms a nano-cage that allows encapsulation of the non-native substrate proteins and provides a physical environment optimized to promote and accelerate protein folding. GroES binds to the apical surface of the GroEL ring, thereby capping the opening of the GroEL channel. This chain is Co-chaperonin GroES, found in Vibrio harveyi (Beneckea harveyi).